Here is a 295-residue protein sequence, read N- to C-terminus: Inositol monophosphatase 1 (295 aa).

Residues Glu-73, Asp-92, Ile-94, Asp-95, and Asp-231 each contribute to the Mg(2+) site. Residue Glu-73 participates in substrate binding. Residues Ile-94–Thr-97 and Asp-231 each bind substrate.

This sequence belongs to the inositol monophosphatase superfamily. Mg(2+) is required as a cofactor.

It localises to the cytoplasm. The protein resides in the nucleus. The enzyme catalyses a myo-inositol phosphate + H2O = myo-inositol + phosphate. It participates in polyol metabolism; myo-inositol biosynthesis; myo-inositol from D-glucose 6-phosphate: step 2/2. Inhibited by Li(+) and Na(+). Its function is as follows. Responsible for the provision of inositol required for synthesis of phosphatidylinositol and polyphosphoinositides. This chain is Inositol monophosphatase 1 (INM1), found in Saccharomyces cerevisiae (strain ATCC 204508 / S288c) (Baker's yeast).